Consider the following 248-residue polypeptide: 5'-nucleotidase SurE (248 aa).

A divalent metal cation is bound by residues D8, D9, S39, and N91.

The protein belongs to the SurE nucleotidase family. Requires a divalent metal cation as cofactor.

Its subcellular location is the cytoplasm. It carries out the reaction a ribonucleoside 5'-phosphate + H2O = a ribonucleoside + phosphate. Functionally, nucleotidase that shows phosphatase activity on nucleoside 5'-monophosphates. The chain is 5'-nucleotidase SurE from Citrifermentans bemidjiense (strain ATCC BAA-1014 / DSM 16622 / JCM 12645 / Bem) (Geobacter bemidjiensis).